Here is a 290-residue protein sequence, read N- to C-terminus: MNKKSILSKTSLGSLFFLFGTALSACSSATTEVISSFSSAQKYFSANKKELNKRNLVTILKDSYNSDPKSTVNSLLAGWKYSLLDQKLLENPMDPSRFSKAFGSNTKDDVNPNISEKGLYLAETYPGVSSQIAQVLGVQSQKVTGFSYSWTSKTKFEVKILIKMKGKVGSDGTSQTLIKSFLGTDSKGSGSNNQNGGVTEKDFEGDQANFDGNFIFTYTQPSDGRRLASNNFDPITGTINFPADLQIEVSTSHEKLNTLMTTNTQVGMIKNRSFKGKSFNLLPFFYYALL.

The N-terminal stretch at 1-25 is a signal peptide; sequence MNKKSILSKTSLGSLFFLFGTALSA. Cysteine 26 is lipidated: N-palmitoyl cysteine. Cysteine 26 carries the S-diacylglycerol cysteine lipid modification. The interval 183-203 is disordered; the sequence is GTDSKGSGSNNQNGGVTEKDF. Positions 186–197 are enriched in low complexity; the sequence is SKGSGSNNQNGG.

It belongs to the MG439/MG440 family.

Its subcellular location is the cell membrane. This is an uncharacterized protein from Mycoplasma pneumoniae (strain ATCC 29342 / M129 / Subtype 1) (Mycoplasmoides pneumoniae).